A 212-amino-acid polypeptide reads, in one-letter code: Peptide methionine sulfoxide reductase MsrA (212 aa).

Cys-52 is a catalytic residue.

This sequence belongs to the MsrA Met sulfoxide reductase family.

The catalysed reaction is L-methionyl-[protein] + [thioredoxin]-disulfide + H2O = L-methionyl-(S)-S-oxide-[protein] + [thioredoxin]-dithiol. The enzyme catalyses [thioredoxin]-disulfide + L-methionine + H2O = L-methionine (S)-S-oxide + [thioredoxin]-dithiol. Its function is as follows. Has an important function as a repair enzyme for proteins that have been inactivated by oxidation. Catalyzes the reversible oxidation-reduction of methionine sulfoxide in proteins to methionine. In Salmonella schwarzengrund (strain CVM19633), this protein is Peptide methionine sulfoxide reductase MsrA.